A 108-amino-acid polypeptide reads, in one-letter code: uncharacterized protein (108 aa).

3 disulfides stabilise this stretch: Cys44–Cys82, Cys60–Cys78, and Cys63–Cys91.

It belongs to the arthropod CHH/MIH/GIH/VIH hormone family.

This is an uncharacterized protein from Caenorhabditis elegans.